We begin with the raw amino-acid sequence, 757 residues long: Relaxin receptor 1 (757 aa).

Residues 1-409 are Extracellular-facing; the sequence is MTSGSVFFYI…ENLLASIIQR (409 aa). Residues 26 to 63 form the LDL-receptor class A domain; sequence KCSLGYFPCGNITKCLPQLLHCNGVDDCGNQADEDNCG. 3 disulfides stabilise this stretch: C27-C40, C34-C53, and C47-C62. An N-linked (GlcNAc...) asparagine glycan is attached at N36. Positions 45, 48, 50, 52, 58, and 59 each coordinate Ca(2+). The LRRNT domain occupies 91 to 127; that stretch reads ETPECLVGSVPVQCLCQGLELDCDETNLRAVPSVSSN. Residue N127 is glycosylated (N-linked (GlcNAc...) asparagine). LRR repeat units follow at residues 151–172, 175–196, 199–220, 223–244, 248–269, 272–293, 296–317, 320–341, and 344–365; these read DLQKLYLQNNKITSISIYAFRG, SLTKLYLSHNRITFLKPGVFED, RLEWLIIEDNHLSRISPPTFYG, SLILLVLMNNVLTRLPDKPLCQ, RLHWLDLEGNHIHNLRNLTFIS, NLTVLVMRKNKINHLNENTFAP, KLDELDLGSNKIENLPPLIFKD, ELSQLNLSYNPIQKIQANQFDY, and KLKSLSLEGIEISNIQQRMFRP. N-linked (GlcNAc...) asparagine glycans are attached at residues N264 and N272. N325 carries N-linked (GlcNAc...) asparagine glycosylation. A glycan (N-linked (GlcNAc...) asparagine) is linked at N368. A helical transmembrane segment spans residues 410–430; the sequence is VFVWVVSAVTCFGNIFVICMR. Residues 431–443 are Cytoplasmic-facing; that stretch reads PYIRSENKLYAMS. A helical membrane pass occupies residues 444–464; the sequence is IISLCCADCLMGIYLFVIGGF. The Extracellular portion of the chain corresponds to 465-486; the sequence is DLKFRGEYNKHAQLWMESTHCQ. An intrachain disulfide couples C485 to C563. A helical membrane pass occupies residues 487–507; that stretch reads LVGSLAILSTEVSVLLLTFLT. At 508-527 the chain is on the cytoplasmic side; sequence LEKYICIVYPFRCVRPGKCR. A helical transmembrane segment spans residues 528 to 548; it reads TITVLILIWITGFIVAFIPLS. Residues 549-577 lie on the Extracellular side of the membrane; sequence NKEFFKNYYGTNGVCFPLHSEDTESIGAQ. A helical membrane pass occupies residues 578–598; it reads IYSVAIFLGINLAAFIIIVFS. Topologically, residues 599-629 are cytoplasmic; it reads YGSMFYSVHQSAITATEIRNQVKKEMILAKR. A helical membrane pass occupies residues 630–650; that stretch reads FFFIVFTDALCWIPIFVVKFL. Position 651 (S651) is a topological domain, extracellular. Residues 652 to 672 form a helical membrane-spanning segment; that stretch reads LLQVEIPGTITSWVVIFILPI. Residues 673-757 lie on the Cytoplasmic side of the membrane; sequence NSALNPILYT…SQSTRLNSYS (85 aa).

This sequence belongs to the G-protein coupled receptor 1 family. As to quaternary structure, interacts with C1QTNF8. In terms of tissue distribution, expressed in the brain, kidney, testis, placenta, uterus, ovary, adrenal, prostate, skin and heart. Not detected in spleen.

Its subcellular location is the cell membrane. Its function is as follows. Receptor for relaxins. The activity of this receptor is mediated by G proteins leading to stimulation of adenylate cyclase and an increase of cAMP. Binding of the ligand may also activate a tyrosine kinase pathway that inhibits the activity of a phosphodiesterase that degrades cAMP. The chain is Relaxin receptor 1 (RXFP1) from Homo sapiens (Human).